The chain runs to 157 residues: Capsid protein (157 aa).

Ser-2 is modified (N-acetylserine; by host).

It belongs to the virgaviridae capsid protein family.

Its subcellular location is the virion. Functionally, capsid protein self-assembles to form rod-shaped virions about 18 nm in diameter with a central canal enclosing the viral genomic RNA. This Brassicaceae (TVCV) protein is Capsid protein (CP).